Here is a 186-residue protein sequence, read N- to C-terminus: Tumor necrosis factor alpha-induced protein 8-like protein 1 (186 aa).

This sequence belongs to the TNFAIP8 family. As to quaternary structure, interacts with FBXW5; TNFAIP8L1 competes with TSC2 to bind FBXW5 increasing TSC2 stability by preventing its ubiquitination. Detected in wide variety tissues, such as neurons in brain, hepatocytes, germ cells of female and male reproductive organs, muscular tissues and variety types of cells of the epithelial origin (at protein level).

It localises to the cytoplasm. Its function is as follows. Acts as a negative regulator of mTOR activity. The polypeptide is Tumor necrosis factor alpha-induced protein 8-like protein 1 (Tnfaip8l1) (Mus musculus (Mouse)).